The following is a 511-amino-acid chain: GMP synthase [glutamine-hydrolyzing] (511 aa).

One can recognise a Glutamine amidotransferase type-1 domain in the interval 3 to 193 (KILILDFGGQ…VYSICDVAGD (191 aa)). Catalysis depends on Cys-80, which acts as the Nucleophile. Residues His-167 and Glu-169 contribute to the active site. A GMPS ATP-PPase domain is found at 194-384 (WEPKNIKLEK…LDIPYQNVYR (191 aa)). 221–227 (SGGVDSL) contributes to the ATP binding site.

In terms of assembly, homodimer.

The catalysed reaction is XMP + L-glutamine + ATP + H2O = GMP + L-glutamate + AMP + diphosphate + 2 H(+). It functions in the pathway purine metabolism; GMP biosynthesis; GMP from XMP (L-Gln route): step 1/1. Catalyzes the synthesis of GMP from XMP. This chain is GMP synthase [glutamine-hydrolyzing], found in Malacoplasma penetrans (strain HF-2) (Mycoplasma penetrans).